The sequence spans 149 residues: MKRQSDPKKGALTGPSQRQLRAGELIRHALVEILREEELQDEALQNISVTVSEVRMSPDLKHAICFVEPLGAGLTGQDTTDIIKGLNRVSKFLRGRLGRSIDMKFTPDLKFIHDESFGTAAYMDKLFLDPRVQQDTRRLSDVVDDEDEA.

Belongs to the RbfA family. In terms of assembly, monomer. Binds 30S ribosomal subunits, but not 50S ribosomal subunits or 70S ribosomes.

The protein resides in the cytoplasm. In terms of biological role, one of several proteins that assist in the late maturation steps of the functional core of the 30S ribosomal subunit. Associates with free 30S ribosomal subunits (but not with 30S subunits that are part of 70S ribosomes or polysomes). Required for efficient processing of 16S rRNA. May interact with the 5'-terminal helix region of 16S rRNA. This chain is Ribosome-binding factor A, found in Caulobacter vibrioides (strain ATCC 19089 / CIP 103742 / CB 15) (Caulobacter crescentus).